The sequence spans 149 residues: Evolved beta-galactosidase subunit beta (149 aa).

As to quaternary structure, heterooctamer of 4 alpha and 4 beta subunits.

In terms of biological role, required for full activity of the EbgA enzyme. Exact function not known. In Escherichia coli O6:H1 (strain CFT073 / ATCC 700928 / UPEC), this protein is Evolved beta-galactosidase subunit beta (ebgC).